Reading from the N-terminus, the 608-residue chain is MNTPTRHPTPNVTTGALPASRKIYVAGEMHEGIRVPMREIATHPTAGEAPLPVYDSSGPYTDPDVSTDIREGLAPLRAAWIKARCDVEAYSGRDVTAADNGFVEGDRLVPEFPVKPAPLRGRQRAAPTQLAYARAGIITPEMEFVAIRENQLRDLSPCHCARDGEDFGANIPDYVTPEFVRAEIAAGRAIIPANINHPELEPMIIGRNFKVKINANMGTSSVTSSMEEEVDKLVWAIRWGADTVMDLSTGRNIHNTREWIIRNSPVPIGTVPIYQALEKVNGIAEDLTWEVFRDTLIEQAEQGVDYFTIHAGVRLHMVPMTVERVTGIVSRGGSIMAKWCLHHHRESFLYEHFEEICDICRQYDVSFSLGDGLRPGSIADANDAAQFAELETLGELTKIAWAKDCQVMIEGPGHVAMHKIKENMDKQLECCHEAPFYTLGPLTTDIAPGYDHITSGIGAAMIGWFGCAMLCYVTPKEHLGLPDRDDVKTGVITYKIAAHAADLAKGLPGAQRRDDALSRARFEFRWEDQFNLSLDPETAQSFHDETLPKEAHKVAHFCSMCGPKFCSMRISHDIRAEAQKEGFEAMAAKFREGGELYVPLKDTAPEEA.

Substrate contacts are provided by residues Asn-216, Met-245, Tyr-274, His-310, 330–332 (SRG), 371–374 (DGLR), and Glu-410. His-414 lines the Zn(2+) pocket. Tyr-437 serves as a coordination point for substrate. His-478 provides a ligand contact to Zn(2+). Residues Cys-558, Cys-561, and Cys-566 each contribute to the [4Fe-4S] cluster site.

Belongs to the ThiC family. As to quaternary structure, homodimer. [4Fe-4S] cluster is required as a cofactor.

It carries out the reaction 5-amino-1-(5-phospho-beta-D-ribosyl)imidazole + S-adenosyl-L-methionine = 4-amino-2-methyl-5-(phosphooxymethyl)pyrimidine + CO + 5'-deoxyadenosine + formate + L-methionine + 3 H(+). Its pathway is cofactor biosynthesis; thiamine diphosphate biosynthesis. In terms of biological role, catalyzes the synthesis of the hydroxymethylpyrimidine phosphate (HMP-P) moiety of thiamine from aminoimidazole ribotide (AIR) in a radical S-adenosyl-L-methionine (SAM)-dependent reaction. This Ruegeria sp. (strain TM1040) (Silicibacter sp.) protein is Phosphomethylpyrimidine synthase.